A 465-amino-acid chain; its full sequence is Cysteine--tRNA ligase (465 aa).

Zn(2+) is bound at residue cysteine 27. The 'HIGH' region signature appears at proline 29–asparagine 39. Zn(2+)-binding residues include cysteine 207, histidine 232, and glutamate 236. Positions lysine 264–serine 268 match the 'KMSKS' region motif. Lysine 267 is an ATP binding site.

Belongs to the class-I aminoacyl-tRNA synthetase family. Monomer. Requires Zn(2+) as cofactor.

Its subcellular location is the cytoplasm. It catalyses the reaction tRNA(Cys) + L-cysteine + ATP = L-cysteinyl-tRNA(Cys) + AMP + diphosphate. The sequence is that of Cysteine--tRNA ligase from Clostridium botulinum (strain Kyoto / Type A2).